Consider the following 115-residue polypeptide: T cell receptor beta variable 7-6 (115 aa).

A signal peptide spans 1–21; it reads MGTSLLCWVVLGFLGTDHTGA. The region spanning 22 to 115 is the Ig-like domain; that stretch reads GVSQSPRYKV…SAMYRCASSL (94 aa). Cys-42 and Cys-111 are oxidised to a cystine.

Alpha-beta TR is a heterodimer composed of an alpha and beta chain; disulfide-linked. The alpha-beta TR is associated with the transmembrane signaling CD3 coreceptor proteins to form the TR-CD3 (TcR or TCR). The assembly of alpha-beta TR heterodimers with CD3 occurs in the endoplasmic reticulum where a single alpha-beta TR heterodimer associates with one CD3D-CD3E heterodimer, one CD3G-CD3E heterodimer and one CD247 homodimer forming a stable octameric structure. CD3D-CD3E and CD3G-CD3E heterodimers preferentially associate with TR alpha and TR beta chains, respectively. The association of the CD247 homodimer is the last step of TcR assembly in the endoplasmic reticulum and is required for transport to the cell surface.

It is found in the cell membrane. V region of the variable domain of T cell receptor (TR) beta chain that participates in the antigen recognition. Alpha-beta T cell receptors are antigen specific receptors which are essential to the immune response and are present on the cell surface of T lymphocytes. Recognize peptide-major histocompatibility (MH) (pMH) complexes that are displayed by antigen presenting cells (APC), a prerequisite for efficient T cell adaptive immunity against pathogens. Binding of alpha-beta TR to pMH complex initiates TR-CD3 clustering on the cell surface and intracellular activation of LCK that phosphorylates the ITAM motifs of CD3G, CD3D, CD3E and CD247 enabling the recruitment of ZAP70. In turn ZAP70 phosphorylates LAT, which recruits numerous signaling molecules to form the LAT signalosome. The LAT signalosome propagates signal branching to three major signaling pathways, the calcium, the mitogen-activated protein kinase (MAPK) kinase and the nuclear factor NF-kappa-B (NF-kB) pathways, leading to the mobilization of transcription factors that are critical for gene expression and essential for T cell growth and differentiation. The T cell repertoire is generated in the thymus, by V-(D)-J rearrangement. This repertoire is then shaped by intrathymic selection events to generate a peripheral T cell pool of self-MH restricted, non-autoaggressive T cells. Post-thymic interaction of alpha-beta TR with the pMH complexes shapes TR structural and functional avidity. This chain is T cell receptor beta variable 7-6, found in Homo sapiens (Human).